A 491-amino-acid polypeptide reads, in one-letter code: Cytochrome P450 2B4 (491 aa).

At Ser-128 the chain carries Phosphoserine; by PKA. A heme-binding site is contributed by Cys-436.

The protein belongs to the cytochrome P450 family. It depends on heme as a cofactor.

The protein resides in the endoplasmic reticulum membrane. Its subcellular location is the microsome membrane. The catalysed reaction is an organic molecule + reduced [NADPH--hemoprotein reductase] + O2 = an alcohol + oxidized [NADPH--hemoprotein reductase] + H2O + H(+). Cytochromes P450 are a group of heme-thiolate monooxygenases. In liver microsomes, this enzyme is involved in an NADPH-dependent electron transport pathway. It oxidizes a variety of structurally unrelated compounds, including steroids, fatty acids, and xenobiotics. In the epoxidation of arachidonic acid it has a unique preference for the 5,6-olefin. The protein is Cytochrome P450 2B4 (CYP2B4) of Oryctolagus cuniculus (Rabbit).